A 470-amino-acid polypeptide reads, in one-letter code: Probable glycosyltransferase At3g07620 (470 aa).

Over 1–7 (MRDYIPK) the chain is Cytoplasmic. Residues 8–28 (YLNAFLLAFATFAVGFAIFIA) form a helical; Signal-anchor membrane-spanning segment. The Lumenal portion of the chain corresponds to 29-470 (KDSNSSSHLY…WLRRLNVKLL (442 aa)). N-linked (GlcNAc...) asparagine glycosylation is found at Asn32, Asn73, Asn105, Asn236, Asn274, and Asn299.

It belongs to the glycosyltransferase 47 family.

It is found in the golgi apparatus membrane. Its function is as follows. May be involved in cell wall biosynthesis. In Arabidopsis thaliana (Mouse-ear cress), this protein is Probable glycosyltransferase At3g07620.